The chain runs to 453 residues: Na(+)/H(+) antiporter NhaA 2 (453 aa).

A run of 11 helical transmembrane segments spans residues 32 to 52, 71 to 91, 109 to 129, 140 to 160, 169 to 189, 193 to 213, 232 to 252, 284 to 304, 310 to 330, 356 to 376, and 382 to 402; these read GALLLAGAVIALIWANSPGAA, LSLAAWAKDGLLAVFFFVAGL, AVPIAAAVGGVLAPAAVYVLI, GWAIPAATDIAFALAVLAVIG, VFLLTLAVVDDLIAIMIIAVF, NLSVTPLLATALPLVAFAILL, ALVHASGVHATVAGVLLALVV, AVPVFALMSAGVAIGGLGGLV, PVAIGVIAGLVIGKPLGVIAV, MLAGIGFTVSLLIGELSFAAG, and HVKIAIVTGSLIAAVLAAVIL. The disordered stretch occupies residues 409–453; it reads GSRGNDATTRDPDQTRVGTATQRTTPDHPTPAATDANQPARSPAP.

The protein belongs to the NhaA Na(+)/H(+) (TC 2.A.33) antiporter family.

The protein localises to the cell membrane. The catalysed reaction is Na(+)(in) + 2 H(+)(out) = Na(+)(out) + 2 H(+)(in). Functionally, na(+)/H(+) antiporter that extrudes sodium in exchange for external protons. This Salinispora tropica (strain ATCC BAA-916 / DSM 44818 / JCM 13857 / NBRC 105044 / CNB-440) protein is Na(+)/H(+) antiporter NhaA 2.